Reading from the N-terminus, the 253-residue chain is Phosphoadenosine 5'-phosphosulfate reductase (253 aa).

The active-site Nucleophile; cysteine thiosulfonate intermediate is the C242.

This sequence belongs to the PAPS reductase family. CysH subfamily.

It is found in the cytoplasm. It catalyses the reaction [thioredoxin]-disulfide + sulfite + adenosine 3',5'-bisphosphate + 2 H(+) = [thioredoxin]-dithiol + 3'-phosphoadenylyl sulfate. The protein operates within sulfur metabolism; hydrogen sulfide biosynthesis; sulfite from sulfate: step 3/3. Functionally, catalyzes the formation of sulfite from phosphoadenosine 5'-phosphosulfate (PAPS) using thioredoxin as an electron donor. The polypeptide is Phosphoadenosine 5'-phosphosulfate reductase (Vibrio cholerae serotype O1 (strain ATCC 39541 / Classical Ogawa 395 / O395)).